The sequence spans 129 residues: Small ribosomal subunit protein uS11 (129 aa).

This sequence belongs to the universal ribosomal protein uS11 family. Part of the 30S ribosomal subunit. Interacts with proteins S7 and S18. Binds to IF-3.

Located on the platform of the 30S subunit, it bridges several disparate RNA helices of the 16S rRNA. Forms part of the Shine-Dalgarno cleft in the 70S ribosome. This is Small ribosomal subunit protein uS11 from Mesorhizobium japonicum (strain LMG 29417 / CECT 9101 / MAFF 303099) (Mesorhizobium loti (strain MAFF 303099)).